Here is a 927-residue protein sequence, read N- to C-terminus: Isoleucine--tRNA ligase (927 aa).

The short motif at 60–70 is the 'HIGH' region element; sequence PYANGNIHLGH. E557 lines the L-isoleucyl-5'-AMP pocket. The 'KMSKS' region signature appears at 598-602; that stretch reads KMSKS. An ATP-binding site is contributed by K601. Zn(2+)-binding residues include C895, C898, C915, and C918.

It belongs to the class-I aminoacyl-tRNA synthetase family. IleS type 1 subfamily. In terms of assembly, monomer. Zn(2+) is required as a cofactor.

The protein resides in the cytoplasm. The catalysed reaction is tRNA(Ile) + L-isoleucine + ATP = L-isoleucyl-tRNA(Ile) + AMP + diphosphate. Catalyzes the attachment of isoleucine to tRNA(Ile). As IleRS can inadvertently accommodate and process structurally similar amino acids such as valine, to avoid such errors it has two additional distinct tRNA(Ile)-dependent editing activities. One activity is designated as 'pretransfer' editing and involves the hydrolysis of activated Val-AMP. The other activity is designated 'posttransfer' editing and involves deacylation of mischarged Val-tRNA(Ile). This chain is Isoleucine--tRNA ligase, found in Syntrophomonas wolfei subsp. wolfei (strain DSM 2245B / Goettingen).